Reading from the N-terminus, the 452-residue chain is Trigger factor (452 aa).

Residues 171 to 256 (GDRVTVSFKG…ATKLEAPQET (86 aa)) form the PPIase FKBP-type domain.

This sequence belongs to the FKBP-type PPIase family. Tig subfamily.

It is found in the cytoplasm. It catalyses the reaction [protein]-peptidylproline (omega=180) = [protein]-peptidylproline (omega=0). In terms of biological role, involved in protein export. Acts as a chaperone by maintaining the newly synthesized protein in an open conformation. Functions as a peptidyl-prolyl cis-trans isomerase. This is Trigger factor from Rhodopseudomonas palustris (strain ATCC BAA-98 / CGA009).